The sequence spans 453 residues: Membrane-bound acylglycerophosphatidylinositol O-acyltransferase mboa-7 (453 aa).

Transmembrane regions (helical) follow at residues I4–G24, I36–V56, L79–L99, A154–I174, V195–I215, A220–F240, and V244–P264. N319 carries N-linked (GlcNAc...) asparagine glycosylation. Residue H350 is part of the active site. 2 helical membrane-spanning segments follow: residues A354–F374 and F421–A441.

This sequence belongs to the membrane-bound acyltransferase family. In terms of tissue distribution, expressed ubiquitously throughout development from early embryo to larval and adult stages. In adults, strongly expressed in pharyngeal muscle, body wall muscle, vulval cells, distal tip cells, intestinal cells and spermatheca.

It localises to the membrane. It carries out the reaction 1-octadecanoyl-sn-glycero-3-phospho-(1D-myo-inositol) + (5Z,8Z,11Z,14Z,17Z)-eicosapentaenoyl-CoA = 1-octadecanoyl-2-(5Z,8Z,11Z,14Z,17Z-eicosapentaenoyl)-sn-glycero-3-phospho-(1D-myo-inositol) + CoA. The enzyme catalyses a 1-acyl-sn-glycero-3-phospho-(1D-myo-inositol) + (5Z,8Z,11Z,14Z,17Z)-eicosapentaenoyl-CoA = a 1-acyl-2-(5Z,8Z,11Z,14Z,17Z-eicosapentaenoyl)-sn-glycero-3-phospho-(1D-myo-inositol) + CoA. It catalyses the reaction a 1-acyl-sn-glycero-3-phospho-(1D-myo-inositol) + (5Z,8Z,11Z,14Z)-eicosatetraenoyl-CoA = a 1-acyl-2-(5Z,8Z,11Z,14Z-eicosatetraenoyl)-sn-glycero-3-phospho-(1D-myo-inositol) + CoA. The protein operates within lipid metabolism; phospholipid metabolism. Its function is as follows. Acyltransferase which mediates the conversion of lysophosphatidylinositol (1-acyl-sn-glycero-3-phosphatidylinositol or LPI) into phosphatidylinositol (1,2-diacyl-sn-glycero-3-phosphoinositol or PI) (LPIAT activity). Prefers sn-2-LPI rather than sn-1-LPI as the acyl acceptor. Lysophospholipid acyltransferases (LPLATs) catalyze the reacylation step of the phospholipid remodeling pathway also known as the Lands cycle. Involved in the selective incorporation of arachidonoyl-CoA ((5Z,8Z,11Z,14Z)-eicosatetraenoyl-CoA) and (5Z,8Z,11Z,14Z,17Z)-eicosapentaenoyl-CoA (EPA-CoA) into PI. Besides its role in biomembranes, PI is a precursor of PI 3-phosphate (PIP3) and its fatty acid composition has an important role in PI3P signaling. This chain is Membrane-bound acylglycerophosphatidylinositol O-acyltransferase mboa-7, found in Caenorhabditis elegans.